The following is a 346-amino-acid chain: S-adenosylmethionine:tRNA ribosyltransferase-isomerase (346 aa).

It belongs to the QueA family. Monomer.

The protein localises to the cytoplasm. The catalysed reaction is 7-aminomethyl-7-carbaguanosine(34) in tRNA + S-adenosyl-L-methionine = epoxyqueuosine(34) in tRNA + adenine + L-methionine + 2 H(+). It functions in the pathway tRNA modification; tRNA-queuosine biosynthesis. Its function is as follows. Transfers and isomerizes the ribose moiety from AdoMet to the 7-aminomethyl group of 7-deazaguanine (preQ1-tRNA) to give epoxyqueuosine (oQ-tRNA). The chain is S-adenosylmethionine:tRNA ribosyltransferase-isomerase from Shewanella frigidimarina (strain NCIMB 400).